We begin with the raw amino-acid sequence, 172 residues long: WW domain binding protein VOPP1 (172 aa).

The first 22 residues, 1-22 (MRRQPAKVAALLLGLLLECTEA), serve as a signal peptide directing secretion. The Extracellular portion of the chain corresponds to 23–60 (KKHCWYFEGLYPTYYICRSYEDCCGSRCCVRALSIQRL). A helical transmembrane segment spans residues 61–81 (WYFWFLLMMGVLFCCGAGFFI). Over 82-172 (RRRMYPPPLI…PPYEQVVKAK (91 aa)) the chain is Cytoplasmic. The interval 102 to 153 (RQPPNPGPGAQQPGPPYYTDPGGPGMNPVGNSMAMAFQVPPNSPQGSVACPP) is disordered. The span at 104 to 119 (PPNPGPGAQQPGPPYY) shows a compositional bias: pro residues.

Belongs to the VOPP1/ECOP family. Interacts with WWOX (via WW domain). In terms of tissue distribution, widely expressed with highest levels in thymus and ovary.

Its subcellular location is the cytoplasmic vesicle membrane. It is found in the late endosome membrane. The protein resides in the lysosome membrane. Its function is as follows. Increases the transcriptional activity of NFKB1 by facilitating its nuclear translocation, DNA-binding and associated apoptotic response, when overexpressed. May sequester WWOX in lysosomal vesicles and thereby regulate WWOX role as tumor suppressor. In Homo sapiens (Human), this protein is WW domain binding protein VOPP1.